Reading from the N-terminus, the 53-residue chain is Large ribosomal subunit protein bL32c (53 aa).

Belongs to the bacterial ribosomal protein bL32 family.

It localises to the plastid. Its subcellular location is the chloroplast. The chain is Large ribosomal subunit protein bL32c from Glycine max (Soybean).